Consider the following 179-residue polypeptide: Probable chorismate pyruvate-lyase (179 aa).

R82, L120, and E165 together coordinate substrate.

This sequence belongs to the UbiC family.

Its subcellular location is the cytoplasm. The catalysed reaction is chorismate = 4-hydroxybenzoate + pyruvate. It participates in cofactor biosynthesis; ubiquinone biosynthesis. Functionally, removes the pyruvyl group from chorismate, with concomitant aromatization of the ring, to provide 4-hydroxybenzoate (4HB) for the ubiquinone pathway. This Vibrio vulnificus (strain CMCP6) protein is Probable chorismate pyruvate-lyase.